The following is a 953-amino-acid chain: E3 ubiquitin-protein ligase ZNF598 (953 aa).

The span at K25–H39 shows a compositional bias: basic residues. A disordered region spans residues K25–S47. The RING-type zinc-finger motif lies at C57–R97. A C2H2-type zinc finger spans residues P215–H238. 2 disordered regions span residues S299–S779 and E884–D911. Over residues A371–S380 the composition is skewed to low complexity. A compositionally biased stretch (basic and acidic residues) spans H381–N409. 2 stretches are compositionally biased toward polar residues: residues N410–L431 and L467–Q483. A Phosphoserine modification is found at S489. 2 stretches are compositionally biased toward low complexity: residues Q508 to A518 and M536 to S553. Composition is skewed to polar residues over residues S555–S564 and L641–T650. The segment covering A655–P666 has biased composition (basic and acidic residues). The span at S695–T711 shows a compositional bias: polar residues. Positions L747 to G765 are enriched in pro residues. The span at P770–S779 shows a compositional bias: polar residues.

Belongs to the ZNF598/HEL2 family.

The protein resides in the cytoplasm. The protein localises to the cytosol. The catalysed reaction is S-ubiquitinyl-[E2 ubiquitin-conjugating enzyme]-L-cysteine + [acceptor protein]-L-lysine = [E2 ubiquitin-conjugating enzyme]-L-cysteine + N(6)-ubiquitinyl-[acceptor protein]-L-lysine.. It functions in the pathway protein modification; protein ubiquitination. In terms of biological role, E3 ubiquitin-protein ligase that plays a key role in the ribosome quality control (RQC), a pathway that takes place when a ribosome has stalled during translation, leading to degradation of nascent peptide chains. ZNF598 is activated when ribosomes are stalled within an mRNA following translation of prematurely polyadenylated mRNAs. Acts as a ribosome collision sensor: specifically recognizes and binds collided di-ribosome, which arises when a trailing ribosome encounters a slower leading ribosome, leading to terminally arrest translation. Following binding to colliding ribosomes, mediates monoubiquitination of 40S ribosomal proteins RPS10/eS10 and RPS3/uS3, and 'Lys-63'-linked polyubiquitination of RPS20/uS10. Polyubiquitination of RPS20/uS10 promotes recruitment of the RQT (ribosome quality control trigger) complex, which drives the disassembly of stalled ribosomes, followed by degradation of nascent peptides. The chain is E3 ubiquitin-protein ligase ZNF598 from Danio rerio (Zebrafish).